A 179-amino-acid chain; its full sequence is Large ribosomal subunit protein uL5 (179 aa).

This sequence belongs to the universal ribosomal protein uL5 family. As to quaternary structure, part of the 50S ribosomal subunit; part of the 5S rRNA/L5/L18/L25 subcomplex. Contacts the 5S rRNA and the P site tRNA. Forms a bridge to the 30S subunit in the 70S ribosome.

Its function is as follows. This is one of the proteins that bind and probably mediate the attachment of the 5S RNA into the large ribosomal subunit, where it forms part of the central protuberance. In the 70S ribosome it contacts protein S13 of the 30S subunit (bridge B1b), connecting the 2 subunits; this bridge is implicated in subunit movement. Contacts the P site tRNA; the 5S rRNA and some of its associated proteins might help stabilize positioning of ribosome-bound tRNAs. The sequence is that of Large ribosomal subunit protein uL5 from Francisella tularensis subsp. tularensis (strain SCHU S4 / Schu 4).